The sequence spans 93 residues: UPF0521 protein B (93 aa).

A coiled-coil region spans residues 2-58; sequence SLKEVITSLKNDFHSINKEIDSMKENNEKQEEKIFQEIKKLKLEMELLRKDNLSFKT.

This sequence belongs to the UPF0521 family.

This Dictyostelium discoideum (Social amoeba) protein is UPF0521 protein B.